We begin with the raw amino-acid sequence, 364 residues long: Aminomethyltransferase (364 aa).

This sequence belongs to the GcvT family. In terms of assembly, the glycine cleavage system is composed of four proteins: P, T, L and H.

The catalysed reaction is N(6)-[(R)-S(8)-aminomethyldihydrolipoyl]-L-lysyl-[protein] + (6S)-5,6,7,8-tetrahydrofolate = N(6)-[(R)-dihydrolipoyl]-L-lysyl-[protein] + (6R)-5,10-methylene-5,6,7,8-tetrahydrofolate + NH4(+). The glycine cleavage system catalyzes the degradation of glycine. The chain is Aminomethyltransferase from Shewanella putrefaciens (strain CN-32 / ATCC BAA-453).